A 244-amino-acid polypeptide reads, in one-letter code: Small ribosomal subunit protein uS3 (244 aa).

One can recognise a KH type-2 domain in the interval isoleucine 38–lysine 106. Residues threonine 217–arginine 244 form a disordered region. Positions glycine 225 to lysine 235 are enriched in gly residues.

Belongs to the universal ribosomal protein uS3 family. In terms of assembly, part of the 30S ribosomal subunit. Forms a tight complex with proteins S10 and S14.

Functionally, binds the lower part of the 30S subunit head. Binds mRNA in the 70S ribosome, positioning it for translation. This chain is Small ribosomal subunit protein uS3, found in Bacteroides fragilis (strain ATCC 25285 / DSM 2151 / CCUG 4856 / JCM 11019 / LMG 10263 / NCTC 9343 / Onslow / VPI 2553 / EN-2).